The following is a 711-amino-acid chain: Polyribonucleotide nucleotidyltransferase (711 aa).

Residues aspartate 486 and aspartate 492 each contribute to the Mg(2+) site. Positions 553–612 (PRIHTIKINPDKIKDVIGKGGSVIRALTEETGTTIEIEDDGTVKIAATDGDKAQHAIRRI) constitute a KH domain. An S1 motif domain is found at 622-690 (GRIYNGKVTR…RQGRVRLSIK (69 aa)). Residues 691-711 (EATEQTPSAAAPEAPVAEQGE) form a disordered region. Low complexity predominate over residues 699-711 (AAAPEAPVAEQGE).

It belongs to the polyribonucleotide nucleotidyltransferase family. As to quaternary structure, component of the RNA degradosome, which is a multiprotein complex involved in RNA processing and mRNA degradation. Requires Mg(2+) as cofactor.

It localises to the cytoplasm. The enzyme catalyses RNA(n+1) + phosphate = RNA(n) + a ribonucleoside 5'-diphosphate. Involved in mRNA degradation. Catalyzes the phosphorolysis of single-stranded polyribonucleotides processively in the 3'- to 5'-direction. This is Polyribonucleotide nucleotidyltransferase from Klebsiella pneumoniae (strain 342).